The chain runs to 632 residues: Extracellular metalloproteinase 1 (632 aa).

Residues 1-19 (MHGLLLAAGLISLPLHVLA) form the signal peptide. The propeptide occupies 20–246 (HPQPSSTSLA…VVDYVAHATF (227 aa)). Residue asparagine 284 is glycosylated (N-linked (GlcNAc...) asparagine). Residue threonine 430 participates in Zn(2+) binding. The active site involves histidine 431. Serine 434 is a binding site for Zn(2+). N-linked (GlcNAc...) asparagine glycosylation is present at asparagine 591.

The protein belongs to the peptidase M36 family. Zn(2+) serves as cofactor.

Its subcellular location is the secreted. Its activity is regulated as follows. PMSF, soybean trypsin inhibitor (SBTI) and chymostatin strongly inhibit the proteinase. Secreted metalloproteinase probably acting as a virulence factor. This Arthroderma otae (Microsporum canis) protein is Extracellular metalloproteinase 1 (MEP1).